The sequence spans 195 residues: Putative kinase protein 143R (195 aa).

ATP is bound at residue Gly-8–Thr-16. Substrate contacts are provided by Glu-31, Tyr-43, and Gln-54. Glu-78 (proton acceptor) is an active-site residue. Residues Arg-79 and Glu-142 each contribute to the substrate site.

This sequence belongs to the DCK/DGK family.

In Acheta domesticus (House cricket), this protein is Putative kinase protein 143R.